A 123-amino-acid polypeptide reads, in one-letter code: Small ribosomal subunit protein uS12 (123 aa).

The disordered stretch occupies residues 1 to 21; it reads MPTIEQLVRKGRQAKPKKSKT. Residues 9 to 20 are compositionally biased toward basic residues; sequence RKGRQAKPKKSK.

It belongs to the universal ribosomal protein uS12 family. In terms of assembly, part of the 30S ribosomal subunit. Contacts proteins S8 and S17. May interact with IF1 in the 30S initiation complex.

With S4 and S5 plays an important role in translational accuracy. In terms of biological role, interacts with and stabilizes bases of the 16S rRNA that are involved in tRNA selection in the A site and with the mRNA backbone. Located at the interface of the 30S and 50S subunits, it traverses the body of the 30S subunit contacting proteins on the other side and probably holding the rRNA structure together. The combined cluster of proteins S8, S12 and S17 appears to hold together the shoulder and platform of the 30S subunit. The sequence is that of Small ribosomal subunit protein uS12 from Bifidobacterium longum (strain NCC 2705).